Consider the following 60-residue polypeptide: Potassium channel toxin alpha-KTx 29.1 (60 aa).

Positions 1 to 28 (MKSVCGVLIILVVLTTMLSISTFSTVGA) are cleaved as a signal peptide. 3 cysteine pairs are disulfide-bonded: C32–C51, C40–C56, and C44–C58.

It belongs to the short scorpion toxin superfamily. Potassium channel inhibitor family. Alpha-KTx 29 subfamily. In terms of tissue distribution, expressed by the venom gland.

It is found in the secreted. Weakly inhibits the Kv1.3/KCNA3 channel (1 uM of the toxin inhibits currents by 13.2%) and Kv7.1/KCNQ1 channel (10 uM of the toxin inhibits currents by 27.7%). This chain is Potassium channel toxin alpha-KTx 29.1, found in Lychas mucronatus (Chinese swimming scorpion).